Here is a 576-residue protein sequence, read N- to C-terminus: Arginine--tRNA ligase (576 aa).

A 'HIGH' region motif is present at residues 122–132 (PNVAKEMHVGH).

This sequence belongs to the class-I aminoacyl-tRNA synthetase family. Monomer.

The protein resides in the cytoplasm. The catalysed reaction is tRNA(Arg) + L-arginine + ATP = L-arginyl-tRNA(Arg) + AMP + diphosphate. The polypeptide is Arginine--tRNA ligase (Thermobifida fusca (strain YX)).